The following is a 321-amino-acid chain: tRNA-dihydrouridine synthase B (321 aa).

FMN contacts are provided by residues 16–18 (PMA) and Gln70. The Proton donor role is filled by Cys100. FMN contacts are provided by residues Lys139, 200–202 (NGD), and 224–225 (GR).

The protein belongs to the Dus family. DusB subfamily. The cofactor is FMN.

It catalyses the reaction a 5,6-dihydrouridine in tRNA + NAD(+) = a uridine in tRNA + NADH + H(+). It carries out the reaction a 5,6-dihydrouridine in tRNA + NADP(+) = a uridine in tRNA + NADPH + H(+). Catalyzes the synthesis of 5,6-dihydrouridine (D), a modified base found in the D-loop of most tRNAs, via the reduction of the C5-C6 double bond in target uridines. The protein is tRNA-dihydrouridine synthase B of Salmonella typhi.